A 267-amino-acid polypeptide reads, in one-letter code: Hydroxyethylthiazole kinase (267 aa).

A substrate-binding site is contributed by methionine 46. 2 residues coordinate ATP: arginine 121 and threonine 167. Alanine 194 contacts substrate.

This sequence belongs to the Thz kinase family. Mg(2+) serves as cofactor.

It carries out the reaction 5-(2-hydroxyethyl)-4-methylthiazole + ATP = 4-methyl-5-(2-phosphooxyethyl)-thiazole + ADP + H(+). It participates in cofactor biosynthesis; thiamine diphosphate biosynthesis; 4-methyl-5-(2-phosphoethyl)-thiazole from 5-(2-hydroxyethyl)-4-methylthiazole: step 1/1. Its function is as follows. Catalyzes the phosphorylation of the hydroxyl group of 4-methyl-5-beta-hydroxyethylthiazole (THZ). The sequence is that of Hydroxyethylthiazole kinase from Rhizobium leguminosarum bv. trifolii (strain WSM2304).